We begin with the raw amino-acid sequence, 304 residues long: Thyroxine 5-deiodinase (304 aa).

Residues 1-22 are disordered; the sequence is MPRQAASRLVVGEGEGPPGASG. At 1 to 44 the chain is on the cytoplasmic side; the sequence is MPRQAASRLVVGEGEGPPGASGPAATMLRSLLLHSLRLCAQTAS. A helical; Signal-anchor for type II membrane protein transmembrane segment spans residues 45–67; the sequence is CLVLFPRFLGTAFMLWLLDFLCI. At 68–304 the chain is on the extracellular side; sequence RKHFLRRRHP…QLHGTRPHRF (237 aa). Residue Sec-170 is part of the active site. Residue Sec-170 is a non-standard amino acid, selenocysteine.

This sequence belongs to the iodothyronine deiodinase family. In terms of assembly, monomer. Homodimer. May undergo minor heretodimerization with DIO1 and DIO2.

Its subcellular location is the cell membrane. The protein localises to the endosome membrane. The catalysed reaction is 3,3',5'-triiodo-L-thyronine + iodide + A + H(+) = L-thyroxine + AH2. It catalyses the reaction 3,3'-diiodo-L-thyronine + iodide + A + H(+) = 3,3',5-triiodo-L-thyronine + AH2. The enzyme catalyses 3-iodo-L-thyronine + iodide + A + H(+) = 3,5-diiodo-L-thyronine + AH2. It carries out the reaction L-thyronine + iodide + A + H(+) = 3-iodo-L-thyronine + AH2. The catalysed reaction is 3',5'-diiodo-L-thyronine + iodide + A + H(+) = 3,3',5'-triiodo-L-thyronine + AH2. It catalyses the reaction 3'-iodo-L-thyronine + iodide + A + H(+) = 3,3'-diiodo-L-thyronine + AH2. The enzyme catalyses 3,3',5'-triiodothyronamine + iodide + A + H(+) = 3,3',5,5'-tetraiodothyronamine + AH2. It carries out the reaction 3',5'-diiodothyronamine + iodide + A + H(+) = 3,3',5'-triiodothyronamine + AH2. The catalysed reaction is 3,3'-diiodothyronamine + iodide + A + H(+) = 3,3',5-triiodothyronamine + AH2. It catalyses the reaction 3-iodothyronamine + iodide + A + H(+) = 3,5-diiodothyronamine + AH2. The enzyme catalyses 3'-iodothyronamine + iodide + A + H(+) = 3,3'-diiodothyronamine + AH2. It carries out the reaction thyronamine + iodide + A + H(+) = 3-iodothyronamine + AH2. Functionally, plays a crucial role in the metabolism of thyroid hormones (TH) and has specific roles in TH activation and inactivation by deiodination. Catalyzes the deiodination of L-thyroxine (T4) to 3,3',5'-triiodothyronine (rT3), 3,5,3'-triiodothyronine (T3) to 3,3'-diiodothyronine (3,3'-T2), 3,5-diiodothyronine (3,5-T2) to 3-monoiodothyronine (3-T1), rT3 to 3',5'-diiodothyronine (3',5'-T2) and 3,3'-T2 to 3'-monoiodothyronine (3'-T1) via inner-ring deiodination (IRD). Catalyzes the deiodination of 3-T1 to L-thyronine (T0) via outer-ring deiodination (ORD). Catalyzes the tyrosyl ring deiodinations of 3,3',5,5'-tetraiodothyronamine, 3,3',5'-triiodothyronamine, 3,5,3'-triiodothyronamine, 3,5-diiodothyronamine, 3,3'-diiodothyronamine and 3-iodothyronamine. This chain is Thyroxine 5-deiodinase (Dio3), found in Mus musculus (Mouse).